We begin with the raw amino-acid sequence, 531 residues long: Importin subunit alpha-2 (531 aa).

The span at 1–10 shows a compositional bias: polar residues; it reads MTLTETSLSH. Positions 1-88 are disordered; sequence MTLTETSLSH…ISHQQSSTRL (88 aa). Positions 5–67 constitute an IBB domain; that stretch reads ETSLSHNAEE…RNIVDVDEGG (63 aa). Basic and acidic residues-rich tracts occupy residues 11–20 and 29–50; these read NAEEGKDEGG and TKHE…KQKG. Over residues 62-75 the composition is skewed to acidic residues; the sequence is DVDEGGNSESELEE. ARM repeat units follow at residues 122–161, 164–203, 250–290, 293–331, 334–374, 377–416, and 420–459; these read NPPI…NIVS, TEQT…NIAG, KNPH…YLTD, DEQI…NVAT, DSLT…NIIA, QKQI…NLAQ, and NRQV…TLML. The interval 511-531 is disordered; it reads DDAGEKESHENADPQDNKWSF. Basic and acidic residues predominate over residues 515–531; the sequence is EKESHENADPQDNKWSF.

Belongs to the importin alpha family. In terms of assembly, forms a complex with an importin beta subunit. Interacts with akir-1. As to expression, germline tissues. Expressed exclusively in germ line cells from the early embryonic through adult stages.

The protein localises to the cytoplasm. The protein resides in the nucleus. It localises to the nucleus envelope. Its function is as follows. Nuclear transport receptor that mediates nuclear import of proteins, and which is involved in sister chromatid cohesion. Binds specifically and directly to substrates containing either a simple or bipartite nuclear localization signals (NLS) motif. Promotes docking of import substrates to the nuclear envelope. Together with akir-1 adapter, required for the import and load of cohesin complex proteins in meiotic nuclei. In Caenorhabditis elegans, this protein is Importin subunit alpha-2.